The chain runs to 273 residues: MTKLIIHLVSDSSVQTAKYTANSALAQFTSVKPKLYHWPMIRNLELLNEVLSKIEYKHGIVLYTIADQELRKTLTKFCYELKIPCISVIGKIIKEMSVFSGIEIEKEQNYNYKFDKTYFDTLNAIDYAIRHDDGQMLNELSEADIILIGPSRTSKTPTSVFLAYNGLKAANIPYVYNCPFPDFIEKDIDQLVVGLVINPNRLIEIREARLNLLQINENKSYTDFNIVQKECLEVRKICDQRNWPVIDVSTRSIEETAALIMRIYYNRKNKYNK.

149 to 156 (GPSRTSKT) is an ADP binding site.

This sequence belongs to the pyruvate, phosphate/water dikinase regulatory protein family. PDRP subfamily.

The enzyme catalyses N(tele)-phospho-L-histidyl/L-threonyl-[pyruvate, phosphate dikinase] + ADP = N(tele)-phospho-L-histidyl/O-phospho-L-threonyl-[pyruvate, phosphate dikinase] + AMP + H(+). It carries out the reaction N(tele)-phospho-L-histidyl/O-phospho-L-threonyl-[pyruvate, phosphate dikinase] + phosphate + H(+) = N(tele)-phospho-L-histidyl/L-threonyl-[pyruvate, phosphate dikinase] + diphosphate. Functionally, bifunctional serine/threonine kinase and phosphorylase involved in the regulation of the pyruvate, phosphate dikinase (PPDK) by catalyzing its phosphorylation/dephosphorylation. The protein is Putative pyruvate, phosphate dikinase regulatory protein of Rickettsia conorii (strain ATCC VR-613 / Malish 7).